The chain runs to 449 residues: MAPHRSRQRNPRFKLWRYDDEPLAIAETMPELRHLKLFGNGLTNLRLEAILDNCVHLVHLDLRRCFNINLLGDLEKRCSERIRDLRRPDDSTADSPFDASSDIYSAGEDDYDFYSDDSDGTLSDHFEECKTVSVATGNESVYVLSFVRSDNFIYPKKIASSSSLSSTPLPSLMKDKKLRNWAELPSKLTSSILLRLGAIEILQNAQKVCKPWHRVCKDPSMWRKIDIDNRNDRAAFKYDLESMCRHAVDRSHGGLIEIEIWYYGTNDLIMYIADRSSNLKSLGLVRCFPITDEGVAKAVSKVPLLEYLEVSYCLFSGESLRDIGRSCPNLKTLKLNRAPEIMFSNSGFDDNAKAIAESMPELRHLQLLGNGLTNKGLNAILDGCPHLEHLDLRQCFNINLVGDLKKRCFERIKDLRCPNDSDDDSDDGSDNGAVTTFGSQFNETDYHWY.

LRR repeat units lie at residues 14 to 37 (KLWR…HLKL) and 39 to 64 (GNGL…DLRR). In terms of domain architecture, F-box spans 178-225 (LRNWAELPSKLTSSILLRLGAIEILQNAQKVCKPWHRVCKDPSMWRKI). 6 LRR repeats span residues 261–286 (WYYG…GLVR), 287–311 (CFPI…LEVS), 312–337 (YCLF…KLNR), 344–367 (SNSG…HLQL), 369–394 (GNGL…DLRQ), and 401–427 (VGDL…DSDD).

In Arabidopsis thaliana (Mouse-ear cress), this protein is Putative F-box/LRR-repeat protein 23 (FBL23).